The sequence spans 438 residues: Lipid-A-disaccharide synthase (438 aa).

It belongs to the LpxB family.

It catalyses the reaction a lipid X + a UDP-2-N,3-O-bis[(3R)-3-hydroxyacyl]-alpha-D-glucosamine = a lipid A disaccharide + UDP + H(+). It functions in the pathway bacterial outer membrane biogenesis; LPS lipid A biosynthesis. Functionally, condensation of UDP-2,3-diacylglucosamine and 2,3-diacylglucosamine-1-phosphate to form lipid A disaccharide, a precursor of lipid A, a phosphorylated glycolipid that anchors the lipopolysaccharide to the outer membrane of the cell. This is Lipid-A-disaccharide synthase from Xanthomonas campestris pv. campestris (strain 8004).